Reading from the N-terminus, the 256-residue chain is Cell division protein ZipA (256 aa).

Over 1–6 the chain is Periplasmic; that stretch reads MQYGRQ. A helical membrane pass occupies residues 7-27; it reads ILICIGILTVIILLLYGLLNS. At 28-256 the chain is on the cytoplasmic side; sequence YWDRTVTFCK…RHVLSANKST (229 aa).

The protein belongs to the ZipA family. Interacts with FtsZ via their C-terminal domains.

The protein localises to the cell inner membrane. Its function is as follows. Essential cell division protein that stabilizes the FtsZ protofilaments by cross-linking them and that serves as a cytoplasmic membrane anchor for the Z ring. Also required for the recruitment to the septal ring of downstream cell division proteins. This Baumannia cicadellinicola subsp. Homalodisca coagulata protein is Cell division protein ZipA.